Reading from the N-terminus, the 678-residue chain is DNA ligase (678 aa).

Residues 36–40 (DAEYD), 85–86 (SL), and E117 contribute to the NAD(+) site. Residue K119 is the N6-AMP-lysine intermediate of the active site. NAD(+) is bound by residues R140, E177, K294, and K318. Residues C412, C415, C430, and C436 each coordinate Zn(2+). The 84-residue stretch at 595–678 (ADEQPLNGQT…NLLREHGIEV (84 aa)) folds into the BRCT domain.

It belongs to the NAD-dependent DNA ligase family. LigA subfamily. Mg(2+) is required as a cofactor. It depends on Mn(2+) as a cofactor.

The enzyme catalyses NAD(+) + (deoxyribonucleotide)n-3'-hydroxyl + 5'-phospho-(deoxyribonucleotide)m = (deoxyribonucleotide)n+m + AMP + beta-nicotinamide D-nucleotide.. Its function is as follows. DNA ligase that catalyzes the formation of phosphodiester linkages between 5'-phosphoryl and 3'-hydroxyl groups in double-stranded DNA using NAD as a coenzyme and as the energy source for the reaction. It is essential for DNA replication and repair of damaged DNA. This Marinobacter nauticus (strain ATCC 700491 / DSM 11845 / VT8) (Marinobacter aquaeolei) protein is DNA ligase.